Here is a 434-residue protein sequence, read N- to C-terminus: 3-phosphoshikimate 1-carboxyvinyltransferase (434 aa).

3-phosphoshikimate contacts are provided by Lys-22, Ser-23, and Arg-27. Lys-22 is a phosphoenolpyruvate binding site. Phosphoenolpyruvate contacts are provided by Gly-93 and Arg-121. Positions 168, 169, 170, 199, 320, and 347 each coordinate 3-phosphoshikimate. Gln-170 contacts phosphoenolpyruvate. Asp-320 (proton acceptor) is an active-site residue. Phosphoenolpyruvate-binding residues include Arg-351, Arg-395, and Lys-420.

The protein belongs to the EPSP synthase family. In terms of assembly, monomer.

The protein localises to the cytoplasm. The enzyme catalyses 3-phosphoshikimate + phosphoenolpyruvate = 5-O-(1-carboxyvinyl)-3-phosphoshikimate + phosphate. Its pathway is metabolic intermediate biosynthesis; chorismate biosynthesis; chorismate from D-erythrose 4-phosphate and phosphoenolpyruvate: step 6/7. Catalyzes the transfer of the enolpyruvyl moiety of phosphoenolpyruvate (PEP) to the 5-hydroxyl of shikimate-3-phosphate (S3P) to produce enolpyruvyl shikimate-3-phosphate and inorganic phosphate. The polypeptide is 3-phosphoshikimate 1-carboxyvinyltransferase (Cupriavidus taiwanensis (strain DSM 17343 / BCRC 17206 / CCUG 44338 / CIP 107171 / LMG 19424 / R1) (Ralstonia taiwanensis (strain LMG 19424))).